A 552-amino-acid polypeptide reads, in one-letter code: Non-structural protein NS1 (552 aa).

This Bluetongue virus 1 (isolate South Africa) (BTV 1) protein is Non-structural protein NS1 (Segment-5).